Here is a 103-residue protein sequence, read N- to C-terminus: Small ribosomal subunit protein uS10 (103 aa).

The protein belongs to the universal ribosomal protein uS10 family. In terms of assembly, part of the 30S ribosomal subunit.

Functionally, involved in the binding of tRNA to the ribosomes. The sequence is that of Small ribosomal subunit protein uS10 from Sulfurovum sp. (strain NBC37-1).